Consider the following 131-residue polypeptide: Phosphoribosyl-AMP cyclohydrolase (131 aa).

Asp74 provides a ligand contact to Mg(2+). Zn(2+) is bound at residue Cys75. Mg(2+) contacts are provided by Asp76 and Asp78. Residues Cys91 and Cys98 each contribute to the Zn(2+) site.

The protein belongs to the PRA-CH family. Homodimer. Requires Mg(2+) as cofactor. Zn(2+) serves as cofactor.

It is found in the cytoplasm. The enzyme catalyses 1-(5-phospho-beta-D-ribosyl)-5'-AMP + H2O = 1-(5-phospho-beta-D-ribosyl)-5-[(5-phospho-beta-D-ribosylamino)methylideneamino]imidazole-4-carboxamide. It participates in amino-acid biosynthesis; L-histidine biosynthesis; L-histidine from 5-phospho-alpha-D-ribose 1-diphosphate: step 3/9. In terms of biological role, catalyzes the hydrolysis of the adenine ring of phosphoribosyl-AMP. The chain is Phosphoribosyl-AMP cyclohydrolase from Bradyrhizobium sp. (strain BTAi1 / ATCC BAA-1182).